A 113-amino-acid polypeptide reads, in one-letter code: Cell cycle protein GpsB (113 aa).

The stretch at 32 to 71 forms a coiled coil; sequence LDNVIKDYESFTKDNQQLSDENERLRAKVDELTKQVAVGA.

The protein belongs to the GpsB family. As to quaternary structure, forms polymers through the coiled coil domains. Interacts with PBP1, MreC and EzrA.

Its subcellular location is the cytoplasm. Its function is as follows. Divisome component that associates with the complex late in its assembly, after the Z-ring is formed, and is dependent on DivIC and PBP2B for its recruitment to the divisome. Together with EzrA, is a key component of the system that regulates PBP1 localization during cell cycle progression. Its main role could be the removal of PBP1 from the cell pole after pole maturation is completed. Also contributes to the recruitment of PBP1 to the division complex. Not essential for septum formation. The protein is Cell cycle protein GpsB of Lactiplantibacillus plantarum (strain ATCC BAA-793 / NCIMB 8826 / WCFS1) (Lactobacillus plantarum).